Reading from the N-terminus, the 208-residue chain is MARYTGPSCRLCRREGSELFLKGERCYTDKCAIKRRSYPPGQHGQGRIKVSDYGVQLREKQKVRRIYGILENQFRGYFETADRMKGVTGENLLFILERRLDNVAYRLGFATSRDEARQLVRHGHFTLNGRKVNIPSLQVKAGDVLQLREKSRKVAAISESLEGVVRRGIPQWLELEKDAFKGTVKAMPVREDITMPIQEQLIVELYSK.

The S4 RNA-binding domain occupies 98–159 (RRLDNVAYRL…KSRKVAAISE (62 aa)).

It belongs to the universal ribosomal protein uS4 family. In terms of assembly, part of the 30S ribosomal subunit. Contacts protein S5. The interaction surface between S4 and S5 is involved in control of translational fidelity.

Its function is as follows. One of the primary rRNA binding proteins, it binds directly to 16S rRNA where it nucleates assembly of the body of the 30S subunit. Functionally, with S5 and S12 plays an important role in translational accuracy. In Geobacter sp. (strain M21), this protein is Small ribosomal subunit protein uS4.